A 132-amino-acid polypeptide reads, in one-letter code: Small ribosomal subunit protein uS8 (132 aa).

The protein belongs to the universal ribosomal protein uS8 family. In terms of assembly, part of the 30S ribosomal subunit. Contacts proteins S5 and S12.

One of the primary rRNA binding proteins, it binds directly to 16S rRNA central domain where it helps coordinate assembly of the platform of the 30S subunit. This chain is Small ribosomal subunit protein uS8, found in Rhodopseudomonas palustris (strain HaA2).